The following is an 83-amino-acid chain: NAD(P)H-quinone oxidoreductase subunit L, organellar chromatophore (83 aa).

The next 2 helical transmembrane spans lie at 17–37 and 53–73; these read LLLAYGVLGGLYLILVPLALY and LFVYGLVFLFFPGLILLSPFL.

It belongs to the complex I NdhL subunit family. NDH-1 can be composed of about 15 different subunits; different subcomplexes with different compositions have been identified which probably have different functions.

It localises to the plastid. The protein resides in the organellar chromatophore thylakoid membrane. The enzyme catalyses a plastoquinone + NADH + (n+1) H(+)(in) = a plastoquinol + NAD(+) + n H(+)(out). It carries out the reaction a plastoquinone + NADPH + (n+1) H(+)(in) = a plastoquinol + NADP(+) + n H(+)(out). In terms of biological role, NDH-1 shuttles electrons from an unknown electron donor, via FMN and iron-sulfur (Fe-S) centers, to quinones in the respiratory and/or the photosynthetic chain. The immediate electron acceptor for the enzyme in this species is believed to be plastoquinone. Couples the redox reaction to proton translocation, and thus conserves the redox energy in a proton gradient. This Paulinella chromatophora protein is NAD(P)H-quinone oxidoreductase subunit L, organellar chromatophore.